Reading from the N-terminus, the 415-residue chain is Serine hydroxymethyltransferase (415 aa).

(6S)-5,6,7,8-tetrahydrofolate contacts are provided by residues Leu-120 and 124 to 126; that span reads GHL. Lys-229 is subject to N6-(pyridoxal phosphate)lysine.

Belongs to the SHMT family. As to quaternary structure, homodimer. Pyridoxal 5'-phosphate serves as cofactor.

The protein resides in the cytoplasm. It catalyses the reaction (6R)-5,10-methylene-5,6,7,8-tetrahydrofolate + glycine + H2O = (6S)-5,6,7,8-tetrahydrofolate + L-serine. Its pathway is one-carbon metabolism; tetrahydrofolate interconversion. The protein operates within amino-acid biosynthesis; glycine biosynthesis; glycine from L-serine: step 1/1. Its function is as follows. Catalyzes the reversible interconversion of serine and glycine with tetrahydrofolate (THF) serving as the one-carbon carrier. This reaction serves as the major source of one-carbon groups required for the biosynthesis of purines, thymidylate, methionine, and other important biomolecules. Also exhibits THF-independent aldolase activity toward beta-hydroxyamino acids, producing glycine and aldehydes, via a retro-aldol mechanism. The sequence is that of Serine hydroxymethyltransferase from Desulforudis audaxviator (strain MP104C).